The sequence spans 530 residues: Copine-B (530 aa).

C2 domains are found at residues 1 to 125 (MTTP…SEIK) and 130 to 253 (ETGV…PLIN). Positions 25, 31, 85, 87, and 100 each coordinate Ca(2+). The region spanning 294–513 (NLMVAIDCTA…ETLREIPQQL (220 aa)) is the VWFA domain.

This sequence belongs to the copine family. Requires Ca(2+) as cofactor.

The chain is Copine-B (cpnB-1) from Dictyostelium discoideum (Social amoeba).